The following is a 157-amino-acid chain: 2-C-methyl-D-erythritol 2,4-cyclodiphosphate synthase (157 aa).

A divalent metal cation is bound by residues D8 and H10. 4-CDP-2-C-methyl-D-erythritol 2-phosphate contacts are provided by residues 8 to 10 and 34 to 35; these read DVH and HS. Residue H42 participates in a divalent metal cation binding. Residues 56 to 58, 61 to 65, 100 to 106, 132 to 135, F139, and R142 each bind 4-CDP-2-C-methyl-D-erythritol 2-phosphate; these read DIG, FPDTD, AQAPKMA, and TTTE.

It belongs to the IspF family. As to quaternary structure, homotrimer. A divalent metal cation is required as a cofactor.

It carries out the reaction 4-CDP-2-C-methyl-D-erythritol 2-phosphate = 2-C-methyl-D-erythritol 2,4-cyclic diphosphate + CMP. The protein operates within isoprenoid biosynthesis; isopentenyl diphosphate biosynthesis via DXP pathway; isopentenyl diphosphate from 1-deoxy-D-xylulose 5-phosphate: step 4/6. Functionally, involved in the biosynthesis of isopentenyl diphosphate (IPP) and dimethylallyl diphosphate (DMAPP), two major building blocks of isoprenoid compounds. Catalyzes the conversion of 4-diphosphocytidyl-2-C-methyl-D-erythritol 2-phosphate (CDP-ME2P) to 2-C-methyl-D-erythritol 2,4-cyclodiphosphate (ME-CPP) with a corresponding release of cytidine 5-monophosphate (CMP). The chain is 2-C-methyl-D-erythritol 2,4-cyclodiphosphate synthase from Azotobacter vinelandii (strain DJ / ATCC BAA-1303).